Reading from the N-terminus, the 430-residue chain is F-box protein At1g49990 (430 aa).

Residues 1-45 (METGRRRTIPEVEILARLPLRSIARFKSVCKRWKSVIESDYFRRL) form the F-box domain.

The protein is F-box protein At1g49990 of Arabidopsis thaliana (Mouse-ear cress).